The following is a 441-amino-acid chain: Mitochondrial distribution and morphology protein 12 (441 aa).

In terms of domain architecture, SMP-LTD spans 1–441; that stretch reads MSIDIDWERA…VYPSFWTFLV (441 aa). Disordered regions lie at residues 68–89 and 183–289; these read DFYE…PMRE and RAVT…RMRE. 2 stretches are compositionally biased toward polar residues: residues 226 to 245 and 253 to 263; these read SRPS…SVST and PSQTLLANNPG.

The protein belongs to the MDM12 family. Component of the ER-mitochondria encounter structure (ERMES) or MDM complex, composed of MMM1, MDM10, MDM12 and MDM34. An MMM1 homodimer associates with one molecule of MDM12 on each side in a pairwise head-to-tail manner, and the SMP-LTD domains of MMM1 and MDM12 generate a continuous hydrophobic tunnel for phospholipid trafficking.

It is found in the mitochondrion outer membrane. Its subcellular location is the endoplasmic reticulum membrane. Functionally, component of the ERMES/MDM complex, which serves as a molecular tether to connect the endoplasmic reticulum (ER) and mitochondria. Components of this complex are involved in the control of mitochondrial shape and protein biogenesis, and function in nonvesicular lipid trafficking between the ER and mitochondria. MDM12 is required for the interaction of the ER-resident membrane protein MMM1 and the outer mitochondrial membrane-resident beta-barrel protein MDM10. The MDM12-MMM1 subcomplex functions in the major beta-barrel assembly pathway that is responsible for biogenesis of all mitochondrial outer membrane beta-barrel proteins, and acts in a late step after the SAM complex. The MDM10-MDM12-MMM1 subcomplex further acts in the TOM40-specific pathway after the action of the MDM12-MMM1 complex. Essential for establishing and maintaining the structure of mitochondria and maintenance of mtDNA nucleoids. This chain is Mitochondrial distribution and morphology protein 12, found in Paracoccidioides lutzii (strain ATCC MYA-826 / Pb01) (Paracoccidioides brasiliensis).